The following is a 346-amino-acid chain: GTP 3',8-cyclase (346 aa).

In terms of domain architecture, Radical SAM core spans 10–240 (QRSRPLRVLR…VTRIRARWPL (231 aa)). Arg19 lines the GTP pocket. Residues Cys26 and Cys30 each coordinate [4Fe-4S] cluster. Tyr32 contributes to the S-adenosyl-L-methionine binding site. Cys33 is a binding site for [4Fe-4S] cluster. Arg65 is a binding site for GTP. An S-adenosyl-L-methionine-binding site is contributed by Gly69. Thr104 contributes to the GTP binding site. Ser129 provides a ligand contact to S-adenosyl-L-methionine. Residue Lys177 participates in GTP binding. Met211 contributes to the S-adenosyl-L-methionine binding site. Residues Cys274 and Cys277 each coordinate [4Fe-4S] cluster. Residue 279 to 281 (RLR) participates in GTP binding. [4Fe-4S] cluster is bound at residue Cys291. The segment at 326 to 346 (SDERQQTTGSMPHAEMAYLGG) is disordered.

This sequence belongs to the radical SAM superfamily. MoaA family. In terms of assembly, monomer and homodimer. Requires [4Fe-4S] cluster as cofactor.

The catalysed reaction is GTP + AH2 + S-adenosyl-L-methionine = (8S)-3',8-cyclo-7,8-dihydroguanosine 5'-triphosphate + 5'-deoxyadenosine + L-methionine + A + H(+). The protein operates within cofactor biosynthesis; molybdopterin biosynthesis. Catalyzes the cyclization of GTP to (8S)-3',8-cyclo-7,8-dihydroguanosine 5'-triphosphate. In Parasynechococcus marenigrum (strain WH8102), this protein is GTP 3',8-cyclase.